The sequence spans 355 residues: MAIDENKQKALAAALGQIEKQFGKGSIMRLGEDRSMDVETISTGSLSLDIALGAGGLPMGRIVEIYGPESSGKTTLTLQVIAAAQREVKTCAFIDAEHALDPIYAKKLGVDIDNLLCSQPDTGEQALEICDALTRSGAVDVIIVDSVAALTPKAEIEGEIGDSHMGLAARMMSQAMRKLAGNLKNANTLLIFINQIRMKIGVMFGNPETTTGGNALKFYASVRLDIRRIGSVKEGDVVVGSETRVKVVKNKVAAPFKQAEFQIMYGEGINIRGELVDLGVKHKLIEKAGAWYSYNGEKIGQGKANACSFLKDHPEVAAELDKKLRDMLLHSAEGNSLVSDVESEDEGASESNEEF.

67–74 (GPESSGKT) lines the ATP pocket. The interval 335-355 (NSLVSDVESEDEGASESNEEF) is disordered. Positions 341 to 355 (VESEDEGASESNEEF) are enriched in acidic residues.

Belongs to the RecA family.

It localises to the cytoplasm. Functionally, can catalyze the hydrolysis of ATP in the presence of single-stranded DNA, the ATP-dependent uptake of single-stranded DNA by duplex DNA, and the ATP-dependent hybridization of homologous single-stranded DNAs. It interacts with LexA causing its activation and leading to its autocatalytic cleavage. This chain is Protein RecA, found in Sodalis glossinidius.